A 293-amino-acid polypeptide reads, in one-letter code: Glycine--tRNA ligase alpha subunit (293 aa).

This sequence belongs to the class-II aminoacyl-tRNA synthetase family. As to quaternary structure, tetramer of two alpha and two beta subunits.

It localises to the cytoplasm. The catalysed reaction is tRNA(Gly) + glycine + ATP = glycyl-tRNA(Gly) + AMP + diphosphate. This chain is Glycine--tRNA ligase alpha subunit, found in Wolinella succinogenes (strain ATCC 29543 / DSM 1740 / CCUG 13145 / JCM 31913 / LMG 7466 / NCTC 11488 / FDC 602W) (Vibrio succinogenes).